The sequence spans 396 residues: MSSATSSTDRLPTAAGDAALQRLRTWPGEHRVAVGLSGGVDSSLTAALLVEAGWEVEGLTLWLMSGKGACCAEGLVDAAGICEQLGIPHHVVDTRDTFQREIVQRLVDGYREGITPLPCSQCNRSVKFGPMLDWAAEERGLPRIATGHYARIRHGGEQGRHQLLRGLDSRKDQSYFLYDLPQEVLGRIVFPLGELTKADTRGEAARHGLRTAEKPESQDLCLADHHGSMRAFLDAYLPPRQGEIVLSDGTVVGEHDGIEHFTIGQRKGLGVAWREPLHVIRLDPAMNQVVVAPRAEAGQRSCVVGAINWVSIAPLQQPLELEVQVRYRSEPVAAQLTPIPHTPEDEARQRPHRCRLQFLDDQFSITPGQAAVFYRGETVLGGGLIQRDDQAQTNRE.

ATP is bound by residues 35 to 42 and Leu61; that span reads GLSGGVDS. Cys122 acts as the Nucleophile in catalysis. Cys122 and Cys221 are oxidised to a cystine. Gly147 is an ATP binding site. An interaction with tRNA region spans residues 171 to 173; the sequence is KDQ. Cys221 serves as the catalytic Cysteine persulfide intermediate. The segment at 326–327 is interaction with tRNA; the sequence is RY.

It belongs to the MnmA/TRMU family.

It localises to the cytoplasm. The catalysed reaction is S-sulfanyl-L-cysteinyl-[protein] + uridine(34) in tRNA + AH2 + ATP = 2-thiouridine(34) in tRNA + L-cysteinyl-[protein] + A + AMP + diphosphate + H(+). Functionally, catalyzes the 2-thiolation of uridine at the wobble position (U34) of tRNA, leading to the formation of s(2)U34. The polypeptide is tRNA-specific 2-thiouridylase MnmA (Parasynechococcus marenigrum (strain WH8102)).